A 717-amino-acid polypeptide reads, in one-letter code: Nuclear factor of activated T-cells, cytoplasmic 1 (717 aa).

The segment at 1-38 (MPNTSFPVPSKFPLGPPAAVCGSGETLRPAPPSGGTMK) is disordered. The segment at 120–125 (PRIEIT) is calcineurin-binding. The interval 128–220 (LGLHHGSGQF…CVSPKTTDPE (93 aa)) is transactivation domain A (TAD-A). Residues 202 to 298 (PQTSPWQSPC…PHGSPRVSVT (97 aa)) are disordered. Positions 203–216 (QTSPWQSPCVSPKT) are enriched in polar residues. 2 tandem repeats follow at residues 205–221 (SPWQ…DPEE) and 235–251 (SPRH…ITEE). A 3 X SP repeats region spans residues 205 to 300 (SPWQSPCVSP…GSPRVSVTED (96 aa)). Serine 235 and serine 239 each carry phosphoserine. The segment covering 238–250 (HSPSTSPRASITE) has biased composition (polar residues). Serine 247 carries the post-translational modification Phosphoserine; by PKA. Positions 267 to 269 (KRK) match the Nuclear localization signal motif. A phosphoserine; by PKA mark is found at serine 271 and serine 296. Repeat unit 3 spans residues 284-300 (SPTPSPHGSPRVSVTED). The short motif at 312–323 (SAIVAAINALTT) is the Nuclear export signal element. The RHD domain occupies 411 to 593 (PSLPALDWQL…NPIECSQRSA (183 aa)). A DNA-binding region spans residues 440–447 (RAHYETEG). Positions 683-685 (KRK) match the Nuclear localization signal motif.

As to quaternary structure, member of the multicomponent NFATC transcription complex that consists of at least two components, a pre-existing cytoplasmic component NFATC2 and an inducible nuclear component NFATC1. Other members such as NFATC4, NFATC3 or members of the activating protein-1 family, MAF, GATA4 and Cbp/p300 can also bind the complex. NFATC proteins bind to DNA as monomers. Interacts with HOMER2 and HOMER3; this interaction may compete with calcineurin/PPP3CA-binding and hence prevent NFATC1 dephosphorylation and activation. Interacts with TLE6/GRG6. In terms of processing, phosphorylated by NFATC-kinase and GSK3B; phosphorylation induces NFATC1 nuclear exit and dephosphorylation by calcineurin promotes nuclear import. Phosphorylation by PKA and DYRK2 negatively modulates nuclear accumulation, and promotes subsequent phosphorylation by GSK3B or casein kinase 1. As to expression, expressed in the submandibular gland (at protein level). Expressed in basal epidermal cells (at protein level). Expressed in spleen, skeletal muscle and skin. Express in the lung and thymus. Weakly expressed in heart, brain, liver and kidney. Not expressed in testis. Expressed in osteoclasts. Also expressed during TNFSF11/RANKL-induced differentiation of bone marrow-derived macrophages to osteoclasts.

It is found in the cytoplasm. The protein resides in the nucleus. Plays a role in the inducible expression of cytokine genes in T-cells, especially in the induction of the IL-2 or IL-4 gene transcription. Also controls gene expression in embryonic cardiac cells. Could regulate not only the activation and proliferation but also the differentiation and programmed death of T-lymphocytes as well as lymphoid and non-lymphoid cells. Required for osteoclastogenesis and regulates many genes important for osteoclast differentiation and function. The protein is Nuclear factor of activated T-cells, cytoplasmic 1 (Nfatc1) of Mus musculus (Mouse).